The sequence spans 232 residues: Small ribosomal subunit protein uS3 (232 aa).

In terms of domain architecture, KH type-2 spans valine 39 to arginine 107. Residues alanine 213 to lysine 232 form a disordered region.

It belongs to the universal ribosomal protein uS3 family. As to quaternary structure, part of the 30S ribosomal subunit. Forms a tight complex with proteins S10 and S14.

In terms of biological role, binds the lower part of the 30S subunit head. Binds mRNA in the 70S ribosome, positioning it for translation. The chain is Small ribosomal subunit protein uS3 from Vibrio campbellii (strain ATCC BAA-1116).